The following is a 293-amino-acid chain: 3-methyl-2-oxobutanoate hydroxymethyltransferase (293 aa).

The disordered stretch occupies residues 1–26 (MTQAPVTAGTPYGTIPPASPLPQRRP). Residues aspartate 68 and aspartate 111 each contribute to the Mg(2+) site. 3-methyl-2-oxobutanoate is bound by residues 68–69 (DS), aspartate 111, and lysine 140. Glutamate 142 contributes to the Mg(2+) binding site. The Proton acceptor role is filled by glutamate 209.

Belongs to the PanB family. In terms of assembly, homodecamer; pentamer of dimers. Mg(2+) serves as cofactor.

Its subcellular location is the cytoplasm. It catalyses the reaction 3-methyl-2-oxobutanoate + (6R)-5,10-methylene-5,6,7,8-tetrahydrofolate + H2O = 2-dehydropantoate + (6S)-5,6,7,8-tetrahydrofolate. Its pathway is cofactor biosynthesis; (R)-pantothenate biosynthesis; (R)-pantoate from 3-methyl-2-oxobutanoate: step 1/2. Catalyzes the reversible reaction in which hydroxymethyl group from 5,10-methylenetetrahydrofolate is transferred onto alpha-ketoisovalerate to form ketopantoate. In Delftia acidovorans (strain DSM 14801 / SPH-1), this protein is 3-methyl-2-oxobutanoate hydroxymethyltransferase.